Consider the following 340-residue polypeptide: L-threonine 3-dehydrogenase (340 aa).

Cys38 contributes to the Zn(2+) binding site. Catalysis depends on charge relay system residues Thr40 and His43. Zn(2+) is bound by residues His63, Glu64, Cys93, Cys96, Cys99, and Cys107. Residues Ile175, Asp195, Arg200, 262-264, and 286-287 each bind NAD(+); these read LGI and IY.

This sequence belongs to the zinc-containing alcohol dehydrogenase family. Homotetramer. The cofactor is Zn(2+).

The protein localises to the cytoplasm. The catalysed reaction is L-threonine + NAD(+) = (2S)-2-amino-3-oxobutanoate + NADH + H(+). Its pathway is amino-acid degradation; L-threonine degradation via oxydo-reductase pathway; glycine from L-threonine: step 1/2. Its function is as follows. Catalyzes the NAD(+)-dependent oxidation of L-threonine to 2-amino-3-ketobutyrate. This chain is L-threonine 3-dehydrogenase, found in Legionella pneumophila (strain Corby).